The primary structure comprises 340 residues: MTDNRPVIGITMGDPVGIGPEIIVSALDDPFVYTVCRPLVLGDEGVMERAIDLKSARMDVHTTDTPAGGKYCHGTMDIVPLSRLDAATLLAGHPTPGTGKAMIDYITTGVDLAMDGKIQAIATCPITKTAMKLAGSKFHGHTELIADRTHTPRVAMMMAGDRLRVVLVTIHIPLCEVSARLNQAEILATISLTSETLKTKFGIPEPRIAVAGLNPHGGEDGMFGSEELEIIAPAVEQARSKGITVSGPFPPDTLFFNAANHKFDAVVCMYHDQGLIPFKMIHFSDGVNTTLGLPIIRTSVDHGTAYDIAWRGTADPSSLIAAIKMAALQATITGANRINR.

Residues H141 and T142 each contribute to the substrate site. The a divalent metal cation site is built by H171, H216, and H271. Positions 279, 288, and 297 each coordinate substrate.

It belongs to the PdxA family. In terms of assembly, homodimer. The cofactor is Zn(2+). Mg(2+) is required as a cofactor. Co(2+) serves as cofactor.

The protein resides in the cytoplasm. It carries out the reaction 4-(phosphooxy)-L-threonine + NAD(+) = 3-amino-2-oxopropyl phosphate + CO2 + NADH. The protein operates within cofactor biosynthesis; pyridoxine 5'-phosphate biosynthesis; pyridoxine 5'-phosphate from D-erythrose 4-phosphate: step 4/5. Functionally, catalyzes the NAD(P)-dependent oxidation of 4-(phosphooxy)-L-threonine (HTP) into 2-amino-3-oxo-4-(phosphooxy)butyric acid which spontaneously decarboxylates to form 3-amino-2-oxopropyl phosphate (AHAP). The chain is 4-hydroxythreonine-4-phosphate dehydrogenase from Desulforapulum autotrophicum (strain ATCC 43914 / DSM 3382 / VKM B-1955 / HRM2) (Desulfobacterium autotrophicum).